The following is an 863-amino-acid chain: Paramyosin (863 aa).

The interval 1–18 (MSESHVKISRTIIRGTSP) is nonhelical region. Positions 19 to 836 (STVRLESRVR…ERTITIKRTI (818 aa)) form a coiled coil. Residues 837-863 (GGPGSRAVSVVREINSVSRGNRATSIM) are nonhelical region.

It belongs to the paramyosin family. As to quaternary structure, homodimer or monomer in secreted form.

The protein localises to the cytoplasm. It localises to the myofibril. Its subcellular location is the secreted. Its function is as follows. Paramyosin is a major structural component of many thick filaments isolated from invertebrate muscles. It is a prominent antigen in human cysticercosis, may have a role as a modulator of the host immune response. It is able to bind collagen and has complement inhibitor activity. In Taenia solium (Pork tapeworm), this protein is Paramyosin (PMY).